We begin with the raw amino-acid sequence, 143 residues long: Putative pre-16S rRNA nuclease (143 aa).

The protein belongs to the YqgF nuclease family.

It localises to the cytoplasm. Its function is as follows. Could be a nuclease involved in processing of the 5'-end of pre-16S rRNA. The chain is Putative pre-16S rRNA nuclease from Leuconostoc mesenteroides subsp. mesenteroides (strain ATCC 8293 / DSM 20343 / BCRC 11652 / CCM 1803 / JCM 6124 / NCDO 523 / NBRC 100496 / NCIMB 8023 / NCTC 12954 / NRRL B-1118 / 37Y).